The sequence spans 133 residues: Large-conductance mechanosensitive channel (133 aa).

A run of 3 helical transmembrane segments spans residues 8–28 (FAMK…GAFG), 30–50 (IVTS…LGGI), and 73–93 (GQFI…FLFI).

It belongs to the MscL family. As to quaternary structure, homopentamer.

It localises to the cell membrane. Functionally, channel that opens in response to stretch forces in the membrane lipid bilayer. May participate in the regulation of osmotic pressure changes within the cell. The protein is Large-conductance mechanosensitive channel of Hathewaya histolytica (Clostridium histolyticum).